The sequence spans 255 residues: NAD-dependent protein deacylase (255 aa).

The Deacetylase sirtuin-type domain occupies 1-253 (MEFSDELLAS…PLLLQALRRS (253 aa)). 22-42 (GAGVSAESGIPTFRDALTGFW) is an NAD(+) binding site. Positions 67 and 70 each coordinate substrate. Residue 101-104 (QNVD) participates in NAD(+) binding. The active-site Proton acceptor is the histidine 119. Zn(2+) contacts are provided by cysteine 127, cysteine 130, cysteine 155, and cysteine 158. NAD(+)-binding positions include 195–197 (GTS), 221–223 (NPA), and alanine 239.

The protein belongs to the sirtuin family. Class III subfamily. It depends on Zn(2+) as a cofactor.

The protein localises to the cytoplasm. The catalysed reaction is N(6)-acetyl-L-lysyl-[protein] + NAD(+) + H2O = 2''-O-acetyl-ADP-D-ribose + nicotinamide + L-lysyl-[protein]. It carries out the reaction N(6)-succinyl-L-lysyl-[protein] + NAD(+) + H2O = 2''-O-succinyl-ADP-D-ribose + nicotinamide + L-lysyl-[protein]. NAD-dependent lysine deacetylase and desuccinylase that specifically removes acetyl and succinyl groups on target proteins. Modulates the activities of several proteins which are inactive in their acylated form. This Methylococcus capsulatus (strain ATCC 33009 / NCIMB 11132 / Bath) protein is NAD-dependent protein deacylase.